The following is a 248-amino-acid chain: MALLEICCYSMECALTAQRNGADRIELCAAPKEGGLTPSFGVLRSVREHITIPVHPIIRPRGGDFYYTDGEFAAMLEDIRLVRELGFPGLVTGVLTVDGDVDMSRMEKIMAAAGPLAVTFHRAFDMCANPFNALKNLADAGVARVLTSGQKADAAQGLSIIMELIAQGDAPTIMAGAGVRANNLQNFLDAGVREVHSSAGVLLPSPMRYRNQGLSMSADIQADEYSRYRVEGAAVAEMKGIIVRHQAK.

It belongs to the CutC family. As to quaternary structure, homodimer.

The protein resides in the cytoplasm. In Salmonella typhimurium (strain LT2 / SGSC1412 / ATCC 700720), this protein is PF03932 family protein CutC.